A 105-amino-acid chain; its full sequence is Intermembrane phospholipid transport system binding protein MlaB (105 aa).

The STAS domain maps to 4 to 105 (WDLQKNNDKI…GLSDWIANFI (102 aa)).

In terms of assembly, the complex is composed of two ATP-binding proteins (MlaF), two transmembrane proteins (MlaE), two cytoplasmic solute-binding proteins (MlaB) and six periplasmic solute-binding proteins (MlaD).

It localises to the cytoplasm. Its function is as follows. Part of the ABC transporter complex MlaFEDB, which is involved in a phospholipid transport pathway that maintains lipid asymmetry in the outer membrane by retrograde trafficking of phospholipids from the outer membrane to the inner membrane. MlaB plays critical roles in both the assembly and activity of the complex. May act by modulating MlaF structure and stability. This chain is Intermembrane phospholipid transport system binding protein MlaB, found in Haemophilus influenzae (strain ATCC 51907 / DSM 11121 / KW20 / Rd).